Reading from the N-terminus, the 576-residue chain is Potassium-transporting ATPase potassium-binding subunit (576 aa).

12 helical membrane passes run 4-24 (QAWI…WPLG), 65-85 (AYAL…YALQ), 136-156 (ALGV…FALI), 179-199 (VYVL…QGVI), 257-277 (LSNF…VFAF), 288-308 (GALL…VTSL), 341-361 (FGIA…CGAV), 371-391 (LGGA…GGVG), 393-413 (GLYG…LMIG), 430-450 (MTAV…AVAL), 497-517 (LLLA…VLAI), and 540-560 (LFVV…YVPA).

Belongs to the KdpA family. In terms of assembly, the system is composed of three essential subunits: KdpA, KdpB and KdpC.

Its subcellular location is the cell inner membrane. In terms of biological role, part of the high-affinity ATP-driven potassium transport (or Kdp) system, which catalyzes the hydrolysis of ATP coupled with the electrogenic transport of potassium into the cytoplasm. This subunit binds the periplasmic potassium ions and delivers the ions to the membrane domain of KdpB through an intramembrane tunnel. The sequence is that of Potassium-transporting ATPase potassium-binding subunit from Methylibium petroleiphilum (strain ATCC BAA-1232 / LMG 22953 / PM1).